Here is an 814-residue protein sequence, read N- to C-terminus: ATP-dependent 6-phosphofructokinase 1 (814 aa).

The tract at residues 1–420 (MDADASTITP…NLETYKLLTK (420 aa)) is N-terminal catalytic PFK domain 1. ATP contacts are provided by residues Gly55, 118 to 119 (RS), and 148 to 151 (GDGS). Mg(2+) is bound at residue Asp149. Substrate is bound by residues 194–196 (SID), Arg231, 238–240 (MGR), Glu294, Arg322, and 328–331 (HVQR). Asp196 (proton acceptor) is an active-site residue. The interdomain linker stretch occupies residues 421–435 (MRTVEKDNLSEGHKF). Residues 436–814 (NVAVINVGAP…EEESADSHMF (379 aa)) form a C-terminal regulatory PFK domain 2 region. Residues Lys505, 563–567 (TISNN), Arg601, 608–610 (MGG), Glu664, Arg690, 696–699 (HVQQ), and Arg771 contribute to the beta-D-fructose 2,6-bisphosphate site.

The protein belongs to the phosphofructokinase type A (PFKA) family. ATP-dependent PFK group I subfamily. Eukaryotic two domain clade 'E' sub-subfamily. In terms of assembly, homotetramer. Requires Mg(2+) as cofactor.

The protein resides in the cytoplasm. The enzyme catalyses beta-D-fructose 6-phosphate + ATP = beta-D-fructose 1,6-bisphosphate + ADP + H(+). The protein operates within carbohydrate degradation; glycolysis; D-glyceraldehyde 3-phosphate and glycerone phosphate from D-glucose: step 3/4. Allosterically activated by ADP, AMP, or fructose 2,6-bisphosphate, and allosterically inhibited by ATP or citrate. Catalyzes the phosphorylation of D-fructose 6-phosphate to fructose 1,6-bisphosphate by ATP, the first committing step of glycolysis. The protein is ATP-dependent 6-phosphofructokinase 1 of Caenorhabditis elegans.